A 406-amino-acid polypeptide reads, in one-letter code: 5-cytosine rRNA methyltransferase NSUN4 (406 aa).

The S-adenosyl-L-methionine site is built by G207, G208, K209, D226, R231, D259, G260, and D277. C332 (nucleophile) is an active-site residue.

Belongs to the class I-like SAM-binding methyltransferase superfamily. RsmB/NOP family.

It localises to the mitochondrion. The enzyme catalyses a cytidine in rRNA + S-adenosyl-L-methionine = a 5-methylcytidine in rRNA + S-adenosyl-L-homocysteine + H(+). It carries out the reaction a cytidine in mRNA + S-adenosyl-L-methionine = a 5-methylcytidine in mRNA + S-adenosyl-L-homocysteine + H(+). Functionally, involved in mitochondrial ribosome large subunit biogenesis. In terms of biological role, mitochondrial RNA cytosine C(5)-methyltransferase that methylates cytosine to 5-methylcytosine (m5C) in various RNAs, such as rRNAs, mRNAs and some long non-coding RNAs (lncRNAs). Involved in mitochondrial ribosome small subunit (SSU) maturation by catalyzing methylation of mitochondrial 12S rRNA. In Xenopus tropicalis (Western clawed frog), this protein is 5-cytosine rRNA methyltransferase NSUN4 (nsun4).